Consider the following 144-residue polypeptide: Probable disulfide formation protein (144 aa).

A helical transmembrane segment spans residues 10–29 (WNLLLLTWLVALISTLSALF). A disulfide bridge connects residues cysteine 39 and cysteine 42. 2 consecutive transmembrane segments (helical) span residues 44–63 (FQRA…CYRS) and 70–87 (YALP…VHTL). A disulfide bond links cysteine 100 and cysteine 107. Residues 116-138 (GVVPLPALALFAFIIIAILLIII) form a helical membrane-spanning segment.

Belongs to the DsbB family. BdbC subfamily.

It localises to the cell inner membrane. Required for disulfide bond formation in some proteins. The chain is Probable disulfide formation protein from Metapseudomonas resinovorans (Pseudomonas resinovorans).